The sequence spans 250 residues: Aquaporin SIP2-1 (250 aa).

Helical transmembrane passes span 14-34 (PWLV…GALV) and 55-75 (VALS…TGGA). The short motif at 78–80 (NPL) is the NPA 1 element. A run of 4 helical transmembrane segments spans residues 95–115 (LYLF…ILGV), 132–152 (SVGV…VVIV), 178–200 (FHLL…AWAY), and 211–231 (LLVY…VVTL). Positions 191 to 193 (NPA) match the NPA 2 motif.

The protein belongs to the MIP/aquaporin (TC 1.A.8) family. SIP (TC 1.A.8.10) subfamily. Expressed in leaves and anthers, and at lower levels in roots.

The protein localises to the membrane. Functionally, aquaporins facilitate the transport of water and small neutral solutes across cell membranes. The sequence is that of Aquaporin SIP2-1 (SIP2-1) from Oryza sativa subsp. japonica (Rice).